The primary structure comprises 945 residues: Valine--tRNA ligase (945 aa).

A 'HIGH' region motif is present at residues Pro-42–His-52. A 'KMSKS' region motif is present at residues Lys-552–Ser-556. Lys-555 contributes to the ATP binding site. Residues Asp-879–Asp-945 are a coiled coil.

This sequence belongs to the class-I aminoacyl-tRNA synthetase family. ValS type 1 subfamily. In terms of assembly, monomer.

It is found in the cytoplasm. The enzyme catalyses tRNA(Val) + L-valine + ATP = L-valyl-tRNA(Val) + AMP + diphosphate. Its function is as follows. Catalyzes the attachment of valine to tRNA(Val). As ValRS can inadvertently accommodate and process structurally similar amino acids such as threonine, to avoid such errors, it has a 'posttransfer' editing activity that hydrolyzes mischarged Thr-tRNA(Val) in a tRNA-dependent manner. The polypeptide is Valine--tRNA ligase (Neisseria meningitidis serogroup B (strain ATCC BAA-335 / MC58)).